The following is a 122-amino-acid chain: Large ribosomal subunit protein uL14 (122 aa).

This sequence belongs to the universal ribosomal protein uL14 family. As to quaternary structure, part of the 50S ribosomal subunit. Forms a cluster with proteins L3 and L19. In the 70S ribosome, L14 and L19 interact and together make contacts with the 16S rRNA in bridges B5 and B8.

In terms of biological role, binds to 23S rRNA. Forms part of two intersubunit bridges in the 70S ribosome. The chain is Large ribosomal subunit protein uL14 from Variovorax paradoxus (strain S110).